The primary structure comprises 125 residues: Large-conductance mechanosensitive channel (125 aa).

3 helical membrane-spanning segments follow: residues 19 to 39 (VGVIIGAAFTAIVKSLVSNLI), 42 to 62 (LIGIFLGKIDLSNLVFSIGSA), and 67 to 87 (GSFLNEVINFLIIAFVVFLMV).

It belongs to the MscL family. In terms of assembly, homopentamer.

It localises to the cell membrane. In terms of biological role, channel that opens in response to stretch forces in the membrane lipid bilayer. May participate in the regulation of osmotic pressure changes within the cell. This Limosilactobacillus fermentum (strain NBRC 3956 / LMG 18251) (Lactobacillus fermentum) protein is Large-conductance mechanosensitive channel.